The following is a 387-amino-acid chain: 8-amino-7-oxononanoate synthase (387 aa).

Residues Arg31 and Arg38 each coordinate substrate. 118–119 (GY) contacts pyridoxal 5'-phosphate. A substrate-binding site is contributed by His143. Pyridoxal 5'-phosphate-binding positions include Ser191, 216 to 219 (DDAH), and 236 to 239 (TLSK). N6-(pyridoxal phosphate)lysine is present on Lys239. Thr348 contributes to the substrate binding site.

The protein belongs to the class-II pyridoxal-phosphate-dependent aminotransferase family. BioF subfamily. In terms of assembly, homodimer. Requires pyridoxal 5'-phosphate as cofactor.

It carries out the reaction 6-carboxyhexanoyl-[ACP] + L-alanine + H(+) = (8S)-8-amino-7-oxononanoate + holo-[ACP] + CO2. It participates in cofactor biosynthesis; biotin biosynthesis. Functionally, catalyzes the decarboxylative condensation of pimeloyl-[acyl-carrier protein] and L-alanine to produce 8-amino-7-oxononanoate (AON), [acyl-carrier protein], and carbon dioxide. In Methylorubrum populi (strain ATCC BAA-705 / NCIMB 13946 / BJ001) (Methylobacterium populi), this protein is 8-amino-7-oxononanoate synthase.